The primary structure comprises 87 residues: DNA-directed RNA polymerase subunit omega (87 aa).

The protein belongs to the RNA polymerase subunit omega family. The RNAP catalytic core consists of 2 alpha, 1 beta, 1 beta' and 1 omega subunit. When a sigma factor is associated with the core the holoenzyme is formed, which can initiate transcription.

It carries out the reaction RNA(n) + a ribonucleoside 5'-triphosphate = RNA(n+1) + diphosphate. Promotes RNA polymerase assembly. Latches the N- and C-terminal regions of the beta' subunit thereby facilitating its interaction with the beta and alpha subunits. This chain is DNA-directed RNA polymerase subunit omega, found in Pseudomonas syringae pv. syringae (strain B728a).